Here is a 310-residue protein sequence, read N- to C-terminus: Bacteriochlorophyll synthase 34 kDa chain (310 aa).

Residues 1–13 are compositionally biased toward polar residues; that stretch reads MSDMSDQTRLSSP. The interval 1 to 20 is disordered; sequence MSDMSDQTRLSSPPSLPLHK. 8 helical membrane passes run 39-59, 67-87, 112-132, 134-154, 166-186, 187-207, 248-268, and 287-307; these read VTWFAPTWAFMCGAIASGALG, LLLGMFMAGPILCGLSQVVND, HVYILTAVLTWIGASIALFLG, QVAFFVALGLVFALAYSLRPI, LVAISYEGLAWMAGHAAFAPL, TGESVTIALLYSLGAHGIMTV, VIGLLFHWGHPVAATVVAILL, and VFFNATAIMLYVWGMLAAAIG.

Its subcellular location is the cell membrane. Its pathway is porphyrin-containing compound metabolism; bacteriochlorophyll biosynthesis (light-independent). In terms of biological role, catalyzes the esterification of bacteriochlorophyllide a by geranylgeraniol-PPi. In Chloroflexus aurantiacus (strain ATCC 29366 / DSM 635 / J-10-fl), this protein is Bacteriochlorophyll synthase 34 kDa chain (bchG).